Reading from the N-terminus, the 248-residue chain is NADP-dependent 3-hydroxy acid dehydrogenase YdfG (248 aa).

Residues 7–12, 32–33, 54–55, and Asn-81 contribute to the NADP(+) site; these read GATAGF, RR, and DV. Ser-134 is a binding site for substrate. NADP(+)-binding positions include Tyr-147, Lys-151, and 177 to 185; that span reads PGLVGGTEF. Catalysis depends on Tyr-147, which acts as the Proton acceptor.

Belongs to the short-chain dehydrogenases/reductases (SDR) family. In terms of assembly, homotetramer.

It carries out the reaction 3-hydroxypropanoate + NADP(+) = 3-oxopropanoate + NADPH + H(+). It catalyses the reaction L-allo-threonine + NADP(+) = aminoacetone + CO2 + NADPH. NADP-dependent dehydrogenase with broad substrate specificity acting on 3-hydroxy acids. Catalyzes the NADP-dependent oxidation of L-allo-threonine to L-2-amino-3-keto-butyrate, which is spontaneously decarboxylated into aminoacetone. Also acts on D-threonine, L-serine, D-serine, D-3-hydroxyisobutyrate, L-3-hydroxyisobutyrate, D-glycerate and L-glycerate. Able to catalyze the reduction of the malonic semialdehyde to 3-hydroxypropionic acid. YdfG is apparently supplementing RutE, the presumed malonic semialdehyde reductase involved in pyrimidine degradation since both are able to detoxify malonic semialdehyde. This chain is NADP-dependent 3-hydroxy acid dehydrogenase YdfG, found in Escherichia coli (strain K12).